Reading from the N-terminus, the 133-residue chain is ATP synthase epsilon chain, chloroplastic (133 aa).

This sequence belongs to the ATPase epsilon chain family. In terms of assembly, F-type ATPases have 2 components, CF(1) - the catalytic core - and CF(0) - the membrane proton channel. CF(1) has five subunits: alpha(3), beta(3), gamma(1), delta(1), epsilon(1). CF(0) has three main subunits: a, b and c.

The protein resides in the plastid. Its subcellular location is the chloroplast thylakoid membrane. Its function is as follows. Produces ATP from ADP in the presence of a proton gradient across the membrane. The polypeptide is ATP synthase epsilon chain, chloroplastic (Nicotiana sylvestris (Wood tobacco)).